A 76-amino-acid chain; its full sequence is Conopeptide X11.1 (76 aa).

The signal sequence occupies residues 1–20; sequence MMKLSVSFLLLLMLLPFITG. Residues 21-39 constitute a propeptide that is removed on maturation; the sequence is EENSDSDVLKSGAAVRQGR. Disulfide bonds link Cys42/Cys56, Cys49/Cys61, Cys55/Cys66, and Cys60/Cys73.

As to expression, expressed by the venom duct.

It localises to the secreted. In terms of biological role, antimicrobial peptide that potently inhibits growth of Mycobacterium tuberculosis (H37Rv strain) (MIC=3 uM). This is Conopeptide X11.1 from Conasprella ximenes (Interrupted cone).